Reading from the N-terminus, the 7763-residue chain is Nonribosomal peptide synthetase agiA (7763 aa).

The tract at residues 20-168 is condensation 1; it reads APSVMQEEMI…DGWSARALLE (149 aa). Residues 469–866 are adenylation 1; the sequence is EQAASKWPSK…GRADGQIKLR (398 aa). The region spanning 995-1071 is the Carrier 1 domain; sequence LPESPAERLL…DVARAMSPSS (77 aa). Serine 1032 carries the O-(pantetheine 4'-phosphoryl)serine modification. The tract at residues 1104-1526 is condensation 2; sequence IYPCTPQQEG…GLSDQKLITG (423 aa). Residues 1562 to 1968 form an adenylation 2 region; the sequence is FEMQADMTPQ…GRIDSQIKLR (407 aa). The Carrier 2 domain maps to 2090–2166; that stretch reads WEQGSIEDKI…SQAKCATSHT (77 aa). O-(pantetheine 4'-phosphoryl)serine is present on serine 2127. The tract at residues 2212–2556 is epimerase (E); the sequence is DHFNQSVLLD…IMPLVFNYQG (345 aa). A condensation 3 region spans residues 2676–3016; the sequence is DIIPCTPMQR…PALVNTLLNF (341 aa). Residues 3136-3531 form an adenylation 3 region; that stretch reads WAAQVPEKVA…GRMDDQIKIR (396 aa). The region spanning 3667–3743 is the Carrier 3 domain; that stretch reads GPESPTEIML…ELATILNTSY (77 aa). Serine 3704 carries the post-translational modification O-(pantetheine 4'-phosphoryl)serine. Positions 3789–4238 are condensation 4; sequence VMPCTPFQEG…ISQSIDALVQ (450 aa). The segment at 4321-4687 is adenylation 4; it reads VGSQQPIIPI…GRFDRQIKIR (367 aa). The Carrier 4 domain occupies 4806–4880; the sequence is APTTEREKVI…DLARQLESTA (75 aa). Serine 4840 is subject to O-(pantetheine 4'-phosphoryl)serine. The tract at residues 4902 to 5339 is condensation 5; sequence SFAQGRLWFL…ALLNDLSMHD (438 aa). The adenylation 5 stretch occupies residues 5361 to 5765; that stretch reads FRQEARSHPD…GRRDDQVKIR (405 aa). Residues 5820-5975 are S-adenosyl-L-methionine-dependent N-methyltransferase; it reads DAWKNVFDTE…YLSEIVQKLV (156 aa). In terms of domain architecture, Carrier 5 spans 6306–6381; sequence EYGSEMERIL…RLADRLLSKQ (76 aa). Serine 6341 carries the O-(pantetheine 4'-phosphoryl)serine modification. Residues 6378-6399 form a disordered region; it reads LSKQSDSNTEANTSTDGKTQHS. The span at 6379 to 6399 shows a compositional bias: polar residues; sequence SKQSDSNTEANTSTDGKTQHS. Positions 6424–6883 are condensation 6; the sequence is MPCTPFQEGV…TVGDAEEAAL (460 aa). The interval 6913 to 7327 is adenylation 6; the sequence is RQAMESPCKI…GRMDSQVKLR (415 aa). In terms of domain architecture, Carrier 6 spans 7446–7522; the sequence is PSPGTLEATL…SQAFRILCDV (77 aa). O-(pantetheine 4'-phosphoryl)serine is present on serine 7483. A thioesterase (TE) region spans residues 7542–7638; sequence TMVLIHPFFG…TGKGSPFSTV (97 aa).

The protein belongs to the NRP synthetase family.

In terms of biological role, nonribosomal peptide synthetase; part of the gene cluster that mediates the biosynthesis of the aspergillicins A and F, 2 cryptic cyclic hexa-depsipeptides. The hexamodular NRPS agiA catalyzes the condensation of the six amino acid residues including N-Me-L-O-Me-tyrosine, L-proline 1, L-proline 2, D-isoleucine, O-acetyl-threonine, and L-isoleucine. The starting condensation domain (C1) of agiA probably loads acetyl-CoA which is condensed on the N-terminus of threonine by the first module to yield O-acetyl-threonine. The second module then loads L-isoleucine. The epimerase (E) domain on module 2 is probably involved in the formation of the D-isoleucine moiety. Modules 3 and 4 further load 2 successive L-prolines. Module 5 is then involved in the condensation of O-Me-L-tyrosine produced by the O-methyltransferase agiB and the N-methyl transferase (NMeT) domain on module 5 probably catalyzes the N-methylation to yield the N-Me-L-O-Me-tyrosine moiety. The A domain of module 5 loads preferentially O-Me-L-tyrosine, but it can also accept L-phenylalanine, which leads to the production of aspergillicin G. Module 6 then loads the last residue, L-isoleucine. The C-terminal thiolesterase (TE) domain probably cyclizes the peptide using the hydroxy group from threonine to form the cyclic depsipeptide. This chain is Nonribosomal peptide synthetase agiA, found in Aspergillus flavus (strain ATCC 200026 / FGSC A1120 / IAM 13836 / NRRL 3357 / JCM 12722 / SRRC 167).